Consider the following 486-residue polypeptide: MFSPMALRPRCAKWLIVTGLFLMLGACVEKPSTLERVKEDGVLRVVTRNSPATYFQDRNGETGFEYELVKRFADDLGVELKIETADNLDDLFDQLGQPKGPVLAAAGLVSSEQRKQQVRFSHPYLEVTPQVIYRNGRSRPTTAQDLVGKHIMVLKGSTHAEQLAELKLKYPGIEYEESDAVEVVDLLRMVDEGQIDLTLVDSNELAMNQVYFPNVRVAFDLGDARSQSWAVAAGDDNSLLNEINSFLDKVEKNGTLQRLKDRYYGHVDVLGYVGAYTFAQHLQQRLPKYEKHFKASAKQEKLDWRLLAAVGYQESMWQAEVTSKTGVRGLMMLTQNTAQAMGVSNRLDPKQSISGGAKYLAYIKEQLDDKIEEPDRTWFALAAYNVGTGHLDDARKLAEKEGLNPNKWLDVKKMLPRLSQKQWYSKTRYGYARGGEPVHFVANIRRYYDILTWVTQPQLEGDQVAEGNLHVPGVNKTKPPEENPPL.

Positions Met1–Ala26 are cleaved as a signal peptide. A non-LT domain region spans residues Cys27–Val267. The segment at Asp268–Leu486 is LT domain. Glu314 is an active-site residue. A disordered region spans residues Val464–Leu486.

It in the N-terminal section; belongs to the bacterial solute-binding protein 3 family. This sequence in the C-terminal section; belongs to the transglycosylase Slt family.

Its subcellular location is the cell outer membrane. It catalyses the reaction Exolytic cleavage of the (1-&gt;4)-beta-glycosidic linkage between N-acetylmuramic acid (MurNAc) and N-acetylglucosamine (GlcNAc) residues in peptidoglycan, from either the reducing or the non-reducing ends of the peptidoglycan chains, with concomitant formation of a 1,6-anhydrobond in the MurNAc residue.. Its function is as follows. Murein-degrading enzyme that degrades murein glycan strands and insoluble, high-molecular weight murein sacculi, with the concomitant formation of a 1,6-anhydromuramoyl product. Lytic transglycosylases (LTs) play an integral role in the metabolism of the peptidoglycan (PG) sacculus. Their lytic action creates space within the PG sacculus to allow for its expansion as well as for the insertion of various structures such as secretion systems and flagella. This Pseudomonas fluorescens (strain ATCC BAA-477 / NRRL B-23932 / Pf-5) protein is Membrane-bound lytic murein transglycosylase F.